We begin with the raw amino-acid sequence, 347 residues long: Tetraacyldisaccharide 4'-kinase (347 aa).

64 to 71 (YVGGTGKT) contributes to the ATP binding site.

This sequence belongs to the LpxK family.

It catalyses the reaction a lipid A disaccharide + ATP = a lipid IVA + ADP + H(+). It participates in glycolipid biosynthesis; lipid IV(A) biosynthesis; lipid IV(A) from (3R)-3-hydroxytetradecanoyl-[acyl-carrier-protein] and UDP-N-acetyl-alpha-D-glucosamine: step 6/6. Its function is as follows. Transfers the gamma-phosphate of ATP to the 4'-position of a tetraacyldisaccharide 1-phosphate intermediate (termed DS-1-P) to form tetraacyldisaccharide 1,4'-bis-phosphate (lipid IVA). The polypeptide is Tetraacyldisaccharide 4'-kinase (Bordetella bronchiseptica (strain ATCC BAA-588 / NCTC 13252 / RB50) (Alcaligenes bronchisepticus)).